Reading from the N-terminus, the 941-residue chain is Isoleucine--tRNA ligase (941 aa).

The short motif at 58–68 (PYANGDIHIGH) is the 'HIGH' region element. Residue Glu562 participates in L-isoleucyl-5'-AMP binding. The 'KMSKS' region motif lies at 603-607 (KMSKS). Residue Lys606 coordinates ATP. Residues Cys904, Cys907, Cys924, and Cys927 each coordinate Zn(2+).

Belongs to the class-I aminoacyl-tRNA synthetase family. IleS type 1 subfamily. Monomer. It depends on Zn(2+) as a cofactor.

Its subcellular location is the cytoplasm. The enzyme catalyses tRNA(Ile) + L-isoleucine + ATP = L-isoleucyl-tRNA(Ile) + AMP + diphosphate. Functionally, catalyzes the attachment of isoleucine to tRNA(Ile). As IleRS can inadvertently accommodate and process structurally similar amino acids such as valine, to avoid such errors it has two additional distinct tRNA(Ile)-dependent editing activities. One activity is designated as 'pretransfer' editing and involves the hydrolysis of activated Val-AMP. The other activity is designated 'posttransfer' editing and involves deacylation of mischarged Val-tRNA(Ile). In Alkalilimnicola ehrlichii (strain ATCC BAA-1101 / DSM 17681 / MLHE-1), this protein is Isoleucine--tRNA ligase.